The primary structure comprises 1054 residues: DIS3-like exonuclease 1 (1054 aa).

The CSD1 domain maps to 236 to 309 (AGIKSGRYIQ…PKNEWKGRTV (74 aa)). In terms of domain architecture, CSD2 spans 365–431 (ILVTPWDYRI…GEIATILVEN (67 aa)). Positions 465–816 (RKDLRKSHLV…VHRLLMAAIS (352 aa)) constitute an RNB domain. Phosphoserine is present on S989.

The protein belongs to the RNR ribonuclease family. As to quaternary structure, component of the RNA exosome complex. The catalytically inactive RNA exosome core (Exo-9) complex is believed to associate with catalytic subunits EXOSC10, and DIS3 or DIS3L in cytoplasmic- and nuclear-specific RNA exosome complex forms. Requires Mg(2+) as cofactor.

The protein resides in the cytoplasm. The catalysed reaction is Exonucleolytic cleavage in the 3'- to 5'-direction to yield nucleoside 5'-phosphates.. Functionally, catalytic component of the RNA exosome complex which has 3'-&gt;5' exoribonuclease activity and participates in a multitude of cellular RNA processing and degradation events. In the cytoplasm, the RNA exosome complex is involved in general mRNA turnover and specifically degrades inherently unstable mRNAs containing AU-rich elements (AREs) within their 3' untranslated regions, and in RNA surveillance pathways, preventing translation of aberrant mRNAs. It seems to be involved in degradation of histone mRNA. This is DIS3-like exonuclease 1 (DIS3L) from Homo sapiens (Human).